The following is an 854-amino-acid chain: V-type proton ATPase 116 kDa subunit a 2 (854 aa).

Over 1 to 393 (MGSLFRSETM…DAYGVGSYQE (393 aa)) the chain is Cytoplasmic. Residues 394 to 412 (VNPALFTIITFPFLFAVMF) traverse the membrane as a helical segment. Over 413-414 (GD) the chain is Vacuolar. The helical transmembrane segment at 415-431 (FGHGFVMFLFALLLVLN) threads the bilayer. The Cytoplasmic portion of the chain corresponds to 432–445 (ENHPRLNQSQEIMR). The helical transmembrane segment at 446 to 475 (MFFNGRYILLLMGLFSVYTGLIYNDCFSKS) threads the bilayer. Topologically, residues 476 to 549 (VNLFGSRWNV…ATNRLTFLNS (74 aa)) are vacuolar. Residues 550–569 (FKMKMSVILGITHMTFGVIL) traverse the membrane as a helical segment. At 570 to 587 (GIFNHLHFRKKFNICLVS) the chain is on the cytoplasmic side. A helical transmembrane segment spans residues 588 to 608 (IPELLFMLCIFGYLIFMIIYK). The Vacuolar portion of the chain corresponds to 609-651 (WLVYSAETSRTAPSILIEFISMFLFLASDTGGLYPGQEHVQRL). A helical membrane pass occupies residues 652 to 671 (LLLITVLSVPVLFLGKPLFL). Topologically, residues 672–739 (LWLHRGRSCF…EILMTQIIHS (68 aa)) are cytoplasmic. A phosphoserine mark is found at Ser-695 and Ser-700. The chain crosses the membrane as a helical span at residues 740–764 (IEYCLGCISNTASYLRLWALSLAHA). Topologically, residues 765–785 (QLSEVLWAMLMHVGLRVDTAY) are vacuolar. The helical transmembrane segment at 786-824 (GVLVLLPVIAFFAVLTIFILLIMEGLSAFLHAIRLHWVE) threads the bilayer. At 825 to 854 (FQNKFYVGAGTKFVPFSFRLLSSKFSDDLA) the chain is on the cytoplasmic side.

The protein belongs to the V-ATPase 116 kDa subunit family. V-ATPase is a heteromultimeric enzyme made up of two complexes: the ATP-hydrolytic V1 complex and the proton translocation V0 complex. The V1 complex consists of three catalytic AB heterodimers that form a heterohexamer, three peripheral stalks each consisting of EG heterodimers, one central rotor including subunits D and F, and the regulatory subunits C and H. The proton translocation complex V0 consists of the proton transport subunit a, a ring of proteolipid subunits c9c'', rotary subunit d, subunits e and f, and the accessory subunits ATP6AP1/Ac45 and ATP6AP2/PRR. Directly interacts with PSCD2 through its N-terminal cytosolic tail in an intra-endosomal acidification-dependent manner. Disruption of this interaction results in the inhibition of endocytosis. Interacts with SPAAR. Highly expressed in lung, kidney and spleen.

The protein localises to the cell membrane. Its subcellular location is the endosome membrane. Functionally, subunit of the V0 complex of vacuolar(H+)-ATPase (V-ATPase), a multisubunit enzyme composed of a peripheral complex (V1) that hydrolyzes ATP and a membrane integral complex (V0) that translocates protons. V-ATPase is responsible for acidifying and maintaining the pH of intracellular compartments and in some cell types, is targeted to the plasma membrane, where it is responsible for acidifying the extracellular environment. Essential component of the endosomal pH-sensing machinery. May play a role in maintaining the Golgi functions, such as glycosylation maturation, by controlling the Golgi pH. In aerobic conditions, involved in intracellular iron homeostasis, thus triggering the activity of Fe(2+) prolyl hydroxylase (PHD) enzymes, and leading to HIF1A hydroxylation and subsequent proteasomal degradation. This Bos taurus (Bovine) protein is V-type proton ATPase 116 kDa subunit a 2 (ATP6V0A2).